The sequence spans 213 residues: Ras-related protein Rab-19 (213 aa).

Serine 24, valine 26, glycine 27, lysine 28, threonine 29, cysteine 30, aspartate 42, and threonine 47 together coordinate GTP. Threonine 29 is a binding site for Mg(2+). A Switch 1 motif is present at residues 37 to 52 (SGIFMDNQQNTIGVDF). Mg(2+) is bound by residues threonine 47 and aspartate 70. A Switch 2 motif is present at residues 72-87 (AGQERFRTITQSYYRS). Residues glycine 73, asparagine 128, lysine 129, aspartate 131, serine 159, alanine 160, and lysine 161 each coordinate GTP. S-geranylgeranyl cysteine attachment occurs at residues cysteine 211 and cysteine 213. Cysteine 213 bears the Cysteine methyl ester mark.

Belongs to the small GTPase superfamily. Rab family. Mg(2+) serves as cofactor.

It localises to the cell membrane. The catalysed reaction is GTP + H2O = GDP + phosphate + H(+). Regulated by guanine nucleotide exchange factors (GEFs) which promote the exchange of bound GDP for free GTP. Regulated by GTPase activating proteins (GAPs) which increase the GTP hydrolysis activity. Inhibited by GDP dissociation inhibitors (GDIs). Functionally, the small GTPases Rab are key regulators of intracellular membrane trafficking, from the formation of transport vesicles to their fusion with membranes. Rabs cycle between an inactive GDP-bound form and an active GTP-bound form that is able to recruit to membranes different set of downstream effectors directly responsible for vesicle formation, movement, tethering and fusion. The polypeptide is Ras-related protein Rab-19 (rab19) (Xenopus laevis (African clawed frog)).